Consider the following 241-residue polypeptide: Protein-L-isoaspartate O-methyltransferase (241 aa).

Serine 69 is a catalytic residue.

It belongs to the methyltransferase superfamily. L-isoaspartyl/D-aspartyl protein methyltransferase family.

The protein resides in the cytoplasm. It catalyses the reaction [protein]-L-isoaspartate + S-adenosyl-L-methionine = [protein]-L-isoaspartate alpha-methyl ester + S-adenosyl-L-homocysteine. Its function is as follows. Catalyzes the methyl esterification of L-isoaspartyl residues in peptides and proteins that result from spontaneous decomposition of normal L-aspartyl and L-asparaginyl residues. It plays a role in the repair and/or degradation of damaged proteins. This chain is Protein-L-isoaspartate O-methyltransferase, found in Hyperthermus butylicus (strain DSM 5456 / JCM 9403 / PLM1-5).